A 357-amino-acid chain; its full sequence is Cyclic AMP-responsive element-binding protein 5 (357 aa).

The disordered stretch occupies residues 114 to 239 (RQDQTPHHHL…FLERNRAAAT (126 aa)). 2 stretches are compositionally biased toward basic residues: residues 120–129 (HHHLHSHPHQ) and 138–175 (PYPHQHQHPAHHPHPQPHHQQNHPHHHSHSHLHAHPAH). Residues 186–195 (TGNQAQVSPA) show a composition bias toward polar residues. Over residues 196-206 (TQQMQPTQTIQ) the composition is skewed to low complexity. Residues 218-235 (VVDEDPDERRRKFLERNR) are compositionally biased toward basic and acidic residues. The region spanning 224–287 (DERRRKFLER…AQLKQLLLTH (64 aa)) is the bZIP domain. A basic motif region spans residues 226 to 246 (RRRKFLERNRAAATRCRQKRK). The tract at residues 252 to 280 (LEKKAEELTQTNMQLQNEVSMLKNEVAQL) is leucine-zipper. Residues 298 to 318 (ESQGYLSPESSPPASPVPACS) form a disordered region.

It belongs to the bZIP family. Binds DNA as a homodimer or as a heterodimer with JUN or ATF2/CREBP1.

It is found in the nucleus. Its function is as follows. Binds to the cAMP response element and activates transcription. This is Cyclic AMP-responsive element-binding protein 5 (Creb5) from Mus musculus (Mouse).